A 288-amino-acid polypeptide reads, in one-letter code: HTH-type transcriptional regulator CzcR (288 aa).

The HTH lysR-type domain occupies 1–58; sequence MELRDLQIFQSVADQGSVSSAAKELNYVQSNVTARIKQLENELKTPLFYRHKRGMTLT. The H-T-H motif DNA-binding region spans 18 to 37; it reads VSSAAKELNYVQSNVTARIK.

This sequence belongs to the LysR transcriptional regulatory family.

The polypeptide is HTH-type transcriptional regulator CzcR (czcR) (Bacillus anthracis).